We begin with the raw amino-acid sequence, 299 residues long: Telomere repeat-binding factor 2 (299 aa).

One can recognise an HTH myb-type domain in the interval 1 to 61 (MGAPKQKWTP…KWRNISVTAL (61 aa)). Residues 28-57 (WRTILSDTEFSLILKSRSNVDLKDKWRNIS) constitute a DNA-binding region (H-T-H motif). The interval 93–116 (LTNDDERAKPTSPGGSGGGSPRTC) is disordered. Residues 121-189 (SITSLDKIIF…KIKHKYRFSS (69 aa)) form the H15 domain. Residues 243–288 (EAAEAAARAVAEAEFAITEAEQAAKEAERAEAEAEAAQIFAKAAMK) adopt a coiled-coil conformation.

It belongs to the histone H1/H5 family. SMH subfamily. In terms of assembly, forms a homodimer and heterodimers with TRB1 or TRB3. Interacts with TRB1 and TRB3. As to expression, ubiquitous.

The protein localises to the nucleus. Its subcellular location is the nucleolus. It is found in the chromosome. Functionally, binds preferentially double-stranded telomeric repeats, but it can also bind to the single G-rich telomeric strand. The sequence is that of Telomere repeat-binding factor 2 (TRB2) from Arabidopsis thaliana (Mouse-ear cress).